Reading from the N-terminus, the 585-residue chain is Proline--tRNA ligase (585 aa).

It belongs to the class-II aminoacyl-tRNA synthetase family. ProS type 1 subfamily. In terms of assembly, homodimer.

Its subcellular location is the cytoplasm. It catalyses the reaction tRNA(Pro) + L-proline + ATP = L-prolyl-tRNA(Pro) + AMP + diphosphate. Catalyzes the attachment of proline to tRNA(Pro) in a two-step reaction: proline is first activated by ATP to form Pro-AMP and then transferred to the acceptor end of tRNA(Pro). As ProRS can inadvertently accommodate and process non-cognate amino acids such as alanine and cysteine, to avoid such errors it has two additional distinct editing activities against alanine. One activity is designated as 'pretransfer' editing and involves the tRNA(Pro)-independent hydrolysis of activated Ala-AMP. The other activity is designated 'posttransfer' editing and involves deacylation of mischarged Ala-tRNA(Pro). The misacylated Cys-tRNA(Pro) is not edited by ProRS. The protein is Proline--tRNA ligase of Cutibacterium acnes (strain DSM 16379 / KPA171202) (Propionibacterium acnes).